Here is a 649-residue protein sequence, read N- to C-terminus: Protein arginine N-methyltransferase 5 (649 aa).

Positions 10-300 are TIM barrel; it reads KSESRYCGVE…SPYLDYIAYI (291 aa). The SAM-dependent MTase PRMT-type domain occupies 321–627; it reads LQSPLQPLMD…CGATKVWYEW (307 aa). Y337 serves as a coordination point for S-adenosyl-L-methionine. An a protein-binding site is contributed by F340. S-adenosyl-L-methionine contacts are provided by residues 346-347, E405, and 433-434; these read KY and DM. Positions 449 and 458 each coordinate a protein. Catalysis depends on proton donor/acceptor residues E449 and E458. The tract at residues 479–649 is beta barrel; the sequence is PSSYTSFIEP…SNGRSYWVGL (171 aa). The dimerization stretch occupies residues 491–507; it reads ASKLHNDIKAHKDIAHF.

This sequence belongs to the class I-like SAM-binding methyltransferase superfamily. Protein arginine N-methyltransferase family.

The protein localises to the cytoplasm. It carries out the reaction L-arginyl-[protein] + 2 S-adenosyl-L-methionine = N(omega),N(omega)'-dimethyl-L-arginyl-[protein] + 2 S-adenosyl-L-homocysteine + 2 H(+). In terms of biological role, methylates arginine residues in proteins such as histone H4. The polypeptide is Protein arginine N-methyltransferase 5 (PRMT5) (Oryza sativa subsp. indica (Rice)).